The chain runs to 142 residues: uncharacterized protein (142 aa).

The protein belongs to the IIV-3 015R family.

This is an uncharacterized protein from Aedes vexans (Inland floodwater mosquito).